The following is a 157-amino-acid chain: Ribosome maturation factor RimP (157 aa).

It belongs to the RimP family.

It localises to the cytoplasm. In terms of biological role, required for maturation of 30S ribosomal subunits. This Lactococcus lactis subsp. lactis (strain IL1403) (Streptococcus lactis) protein is Ribosome maturation factor RimP.